The primary structure comprises 221 residues: FMN-dependent NADH:quinone oxidoreductase 1 (221 aa).

FMN is bound by residues 17–19 and 148–151; these read SAS and SSGG.

Belongs to the azoreductase type 1 family. In terms of assembly, homodimer. The cofactor is FMN.

The catalysed reaction is 2 a quinone + NADH + H(+) = 2 a 1,4-benzosemiquinone + NAD(+). It catalyses the reaction N,N-dimethyl-1,4-phenylenediamine + anthranilate + 2 NAD(+) = 2-(4-dimethylaminophenyl)diazenylbenzoate + 2 NADH + 2 H(+). In terms of biological role, quinone reductase that provides resistance to thiol-specific stress caused by electrophilic quinones. Also exhibits azoreductase activity. Catalyzes the reductive cleavage of the azo bond in aromatic azo compounds to the corresponding amines. The chain is FMN-dependent NADH:quinone oxidoreductase 1 from Clostridium acetobutylicum (strain ATCC 824 / DSM 792 / JCM 1419 / IAM 19013 / LMG 5710 / NBRC 13948 / NRRL B-527 / VKM B-1787 / 2291 / W).